We begin with the raw amino-acid sequence, 298 residues long: uncharacterized protein (298 aa).

The 102-residue stretch at 194–295 (KRLNTALIAI…QLSPSQYRKS (102 aa)) folds into the HTH araC/xylS-type domain. 2 consecutive DNA-binding regions (H-T-H motif) follow at residues 214–235 (EQLAELATMSRANFIRIFQQHI) and 262–285 (VLAIALEVGYQSEAHFCKVFKNYY).

This is an uncharacterized protein from Haemophilus influenzae (strain ATCC 51907 / DSM 11121 / KW20 / Rd).